The chain runs to 250 residues: 3-deoxy-manno-octulosonate cytidylyltransferase (250 aa).

Belongs to the KdsB family.

The protein resides in the cytoplasm. It catalyses the reaction 3-deoxy-alpha-D-manno-oct-2-ulosonate + CTP = CMP-3-deoxy-beta-D-manno-octulosonate + diphosphate. The protein operates within nucleotide-sugar biosynthesis; CMP-3-deoxy-D-manno-octulosonate biosynthesis; CMP-3-deoxy-D-manno-octulosonate from 3-deoxy-D-manno-octulosonate and CTP: step 1/1. Its pathway is bacterial outer membrane biogenesis; lipopolysaccharide biosynthesis. Its function is as follows. Activates KDO (a required 8-carbon sugar) for incorporation into bacterial lipopolysaccharide in Gram-negative bacteria. The sequence is that of 3-deoxy-manno-octulosonate cytidylyltransferase from Syntrophotalea carbinolica (strain DSM 2380 / NBRC 103641 / GraBd1) (Pelobacter carbinolicus).